A 565-amino-acid chain; its full sequence is MSEQKLALNEYLKTDSDYLRGTIKEGLDSSVTGSFSDGDQQLIKFHGFYQQDDRDLRNERKEQKLEPLYSFMLRARVPGGVCTPKQWLGVDEIASTLTSSNSIRLTTRQTFQYHGIPKRNLKTIIQGLDREALDSIAACGDVNRNVMCNPNPVESKLHAQAYEVAKKLSDHLLPHTRAYAEIWLDEEKLLTTEDETVEPVYGKTYLPRKFKMAVAVPPDNDVDVYTNDLGFIAVAENGELVGFNLTAGGGMGSTHGEVETFPRLADDFGFIKTEDVMKFAEAVMTVQRDWGNRTNRKRSRLKYTIVDHGYEKFKAEVEVRAGVKFEPKRDVVIGDRGDRYGWVEGVDGKWHLTLFIESGRIKDMPGKSLQTGMREIAKIHKGDFRMTSNQNMIIAGVAPEDKATIEGLARKRGLLGQVLTQTRGHSIACVALPTCPLAMAEAERYFPEFIDHIDALQAKNGISDQAIVVRMTGCPNGCARPFAAEIGLVGKAPGRYNLYLGANFEGTRLNKMYRENIQEAEILAELDALFARYAIERNAGETFGNFTVRVGVVKAVIDAAKDFHG.

Residues Cys-429, Cys-435, Cys-474, and Cys-478 each coordinate [4Fe-4S] cluster. Cys-478 provides a ligand contact to siroheme.

The protein belongs to the nitrite and sulfite reductase 4Fe-4S domain family. Alpha(8)-beta(8). The alpha component is a flavoprotein, the beta component is a hemoprotein. Siroheme is required as a cofactor. [4Fe-4S] cluster serves as cofactor.

The catalysed reaction is hydrogen sulfide + 3 NADP(+) + 3 H2O = sulfite + 3 NADPH + 4 H(+). It functions in the pathway sulfur metabolism; hydrogen sulfide biosynthesis; hydrogen sulfide from sulfite (NADPH route): step 1/1. Component of the sulfite reductase complex that catalyzes the 6-electron reduction of sulfite to sulfide. This is one of several activities required for the biosynthesis of L-cysteine from sulfate. The sequence is that of Sulfite reductase [NADPH] hemoprotein beta-component from Shewanella oneidensis (strain ATCC 700550 / JCM 31522 / CIP 106686 / LMG 19005 / NCIMB 14063 / MR-1).